A 659-amino-acid polypeptide reads, in one-letter code: Protein kinase byr2 (659 aa).

The SAM domain occupies 4 to 67; the sequence is YTSKEVAEWL…LKQRDYLREF (64 aa). A compositionally biased stretch (low complexity) spans 180–190; it reads PKLSSVLPTST. Disordered regions lie at residues 180–209 and 354–387; these read PKLS…YQRP and SFSP…EEDT. Polar residues predominate over residues 354–365; it reads SFSPGSSPSFIE. A compositionally biased stretch (low complexity) spans 367–380; the sequence is PSPISPTSTTSEDT. The Protein kinase domain occupies 394–658; that stretch reads WIRGALIGSG…ASELLSHPFV (265 aa). ATP is bound by residues 400–408 and K423; that span reads IGSGSFGQV. Catalysis depends on D522, which acts as the Proton acceptor.

It belongs to the protein kinase superfamily. STE Ser/Thr protein kinase family. MAP kinase kinase kinase subfamily. As to quaternary structure, interacts with rad24 and rad25; these prevent its translocation to the cell membrane during nitrogen starvation.

It is found in the cytoplasm. Its subcellular location is the cell membrane. The catalysed reaction is L-seryl-[protein] + ATP = O-phospho-L-seryl-[protein] + ADP + H(+). It catalyses the reaction L-threonyl-[protein] + ATP = O-phospho-L-threonyl-[protein] + ADP + H(+). Serine/threonine protein kinase involved in conjugation and sporulation. It is thought that it phosphorylates the byr1 protein kinase which itself phosphorylate the spk1 kinase. The polypeptide is Protein kinase byr2 (Schizosaccharomyces pombe (strain 972 / ATCC 24843) (Fission yeast)).